Here is a 634-residue protein sequence, read N- to C-terminus: Chaperone protein HtpG (634 aa).

Residues 1 to 342 (MSVETQKETL…SNDLSLNVSR (342 aa)) are a; substrate-binding. Positions 343 to 559 (EILQKDPIID…EQDLGLQMRQ (217 aa)) are b. The segment at 560 to 634 (ILEASGQKVP…LNKLLVELSV (75 aa)) is c.

The protein belongs to the heat shock protein 90 family. As to quaternary structure, homodimer.

The protein resides in the cytoplasm. In terms of biological role, molecular chaperone. Has ATPase activity. This Pseudomonas fluorescens (strain ATCC BAA-477 / NRRL B-23932 / Pf-5) protein is Chaperone protein HtpG.